The sequence spans 387 residues: 3-ketoacyl-CoA thiolase (387 aa).

Cysteine 91 acts as the Acyl-thioester intermediate in catalysis. Active-site proton acceptor residues include histidine 343 and cysteine 373.

The protein belongs to the thiolase-like superfamily. Thiolase family. Heterotetramer of two alpha chains (FadB) and two beta chains (FadA).

It localises to the cytoplasm. It catalyses the reaction an acyl-CoA + acetyl-CoA = a 3-oxoacyl-CoA + CoA. It participates in lipid metabolism; fatty acid beta-oxidation. Catalyzes the final step of fatty acid oxidation in which acetyl-CoA is released and the CoA ester of a fatty acid two carbons shorter is formed. In Pectobacterium carotovorum subsp. carotovorum (strain PC1), this protein is 3-ketoacyl-CoA thiolase.